Here is a 403-residue protein sequence, read N- to C-terminus: Dihydroorotase (403 aa).

Positions 48 and 50 each coordinate Zn(2+). Residues 50–52 (HLR) and Asn-82 each bind substrate. The Zn(2+) site is built by Glu-140, His-172, His-211, and Asp-277. Asp-277 is a catalytic residue. His-281 contacts substrate.

It belongs to the metallo-dependent hydrolases superfamily. DHOase family. Class I DHOase subfamily. Requires Zn(2+) as cofactor.

The enzyme catalyses (S)-dihydroorotate + H2O = N-carbamoyl-L-aspartate + H(+). It functions in the pathway pyrimidine metabolism; UMP biosynthesis via de novo pathway; (S)-dihydroorotate from bicarbonate: step 3/3. Its function is as follows. Catalyzes the reversible cyclization of carbamoyl aspartate to dihydroorotate. The polypeptide is Dihydroorotase (Archaeoglobus fulgidus (strain ATCC 49558 / DSM 4304 / JCM 9628 / NBRC 100126 / VC-16)).